A 90-amino-acid chain; its full sequence is Long neurotoxin 1 (90 aa).

Residues 1–21 form the signal peptide; sequence MKTLLLTLVVVTIVCLDVGNS. 5 cysteine pairs are disulfide-bonded: C24–C42, C35–C63, C48–C52, C67–C78, and C79–C84.

The protein belongs to the three-finger toxin family. Long-chain subfamily. Type II alpha-neurotoxin sub-subfamily. As to expression, expressed by the venom gland.

The protein localises to the secreted. Functionally, binds with high affinity to muscular (alpha-1/CHRNA1) and neuronal (alpha-7/CHRNA7) nicotinic acetylcholine receptor (nAChR) and inhibits acetylcholine from binding to the receptor, thereby impairing neuromuscular and neuronal transmission. The sequence is that of Long neurotoxin 1 from Austrelaps superbus (Lowland copperhead snake).